The sequence spans 110 residues: UPF0060 membrane protein Rpal_4363 (110 aa).

A run of 4 helical transmembrane segments spans residues 4-24, 31-51, 59-79, and 88-108; these read LLTF…FWAW, PLWL…LTLA, AYAA…WAIE, and VIGA…PRAL.

This sequence belongs to the UPF0060 family.

Its subcellular location is the cell inner membrane. The sequence is that of UPF0060 membrane protein Rpal_4363 from Rhodopseudomonas palustris (strain TIE-1).